A 954-amino-acid polypeptide reads, in one-letter code: Glycine dehydrogenase (decarboxylating) (954 aa).

Lys-704 carries the post-translational modification N6-(pyridoxal phosphate)lysine.

It belongs to the GcvP family. In terms of assembly, the glycine cleavage system is composed of four proteins: P, T, L and H. It depends on pyridoxal 5'-phosphate as a cofactor.

The enzyme catalyses N(6)-[(R)-lipoyl]-L-lysyl-[glycine-cleavage complex H protein] + glycine + H(+) = N(6)-[(R)-S(8)-aminomethyldihydrolipoyl]-L-lysyl-[glycine-cleavage complex H protein] + CO2. The glycine cleavage system catalyzes the degradation of glycine. The P protein binds the alpha-amino group of glycine through its pyridoxal phosphate cofactor; CO(2) is released and the remaining methylamine moiety is then transferred to the lipoamide cofactor of the H protein. The sequence is that of Glycine dehydrogenase (decarboxylating) from Vibrio cholerae serotype O1 (strain ATCC 39541 / Classical Ogawa 395 / O395).